Consider the following 698-residue polypeptide: Elongation factor G (698 aa).

The region spanning 10–285 is the tr-type G domain; sequence AGTRNIGIMA…AVVDFLPNPL (276 aa). GTP-binding positions include 19-26, 83-87, and 137-140; these read AHIDAGKT, DTPGH, and NKMD.

This sequence belongs to the TRAFAC class translation factor GTPase superfamily. Classic translation factor GTPase family. EF-G/EF-2 subfamily.

Its subcellular location is the cytoplasm. Catalyzes the GTP-dependent ribosomal translocation step during translation elongation. During this step, the ribosome changes from the pre-translocational (PRE) to the post-translocational (POST) state as the newly formed A-site-bound peptidyl-tRNA and P-site-bound deacylated tRNA move to the P and E sites, respectively. Catalyzes the coordinated movement of the two tRNA molecules, the mRNA and conformational changes in the ribosome. This Frankia casuarinae (strain DSM 45818 / CECT 9043 / HFP020203 / CcI3) protein is Elongation factor G.